The following is a 318-amino-acid chain: Ribose-phosphate pyrophosphokinase (318 aa).

ATP contacts are provided by residues 46–48 and 105–106; these read DGE and RQ. Mg(2+) contacts are provided by His-139 and Asp-178. Lys-201 is an active-site residue. Residues Arg-203, Asp-227, and 231-235 contribute to the D-ribose 5-phosphate site; that span reads DTAGT.

The protein belongs to the ribose-phosphate pyrophosphokinase family. Class I subfamily. As to quaternary structure, homohexamer. Requires Mg(2+) as cofactor.

The protein localises to the cytoplasm. The enzyme catalyses D-ribose 5-phosphate + ATP = 5-phospho-alpha-D-ribose 1-diphosphate + AMP + H(+). Its pathway is metabolic intermediate biosynthesis; 5-phospho-alpha-D-ribose 1-diphosphate biosynthesis; 5-phospho-alpha-D-ribose 1-diphosphate from D-ribose 5-phosphate (route I): step 1/1. In terms of biological role, involved in the biosynthesis of the central metabolite phospho-alpha-D-ribosyl-1-pyrophosphate (PRPP) via the transfer of pyrophosphoryl group from ATP to 1-hydroxyl of ribose-5-phosphate (Rib-5-P). The polypeptide is Ribose-phosphate pyrophosphokinase (Helicobacter pylori (strain J99 / ATCC 700824) (Campylobacter pylori J99)).